Here is a 604-residue protein sequence, read N- to C-terminus: MLTGQHHIPGIESPLMVVLWRVAAGVFLPLVPTMAVFGNVLVILSVYRERNLQTVTNMLIVSLAVSDLFVAIGVMSFGVYYEWNGFKWGLGSFFCHVYQALDVACSTASILNLLAISLDRYIAIGHPISYAQYGARGGRAMISITIVWGVSCAVALPLLLGVNPMENDQCELANPWFNMISSIFSFFIPCIAMIILYTIIFRRLRQRERARSLRQAQRSETDKISSALLGGAQIARQMGKHFKNRTDQILLEISFQTSSFPTISESSDDGSTISPMINSFNNFLPKKSQYPSTLIPAIPECGSMPNLTIIERPAPPEKEKDIELSIMDLHDTVEMLDDKYTSAMITRSFGEELEEILPFIDGSTSVKNSREQLHATRSNTSTTRLLDVKPELRSISVPSIQDEKKMNSRPPENPFAHQNGTNKQRLLPNPGILMKSKSTTLLKTNGYLDTDSLNNNRNSHKKSTADLLPNDDYSFTDSMRVYKNRLFKSLSRATSGWNKPRPSRHMVKKATKQMRREHKATVTLAVVLAVFLFCWLPFFILHLSNSICLVIDSNSDCIGFLPLYLATWLGYLNSSLNPLIYTVFDQRFRNAFRNILSCGFFKKR.

Topologically, residues 1–23 (MLTGQHHIPGIESPLMVVLWRVA) are extracellular. Residues 24–44 (AGVFLPLVPTMAVFGNVLVIL) traverse the membrane as a helical segment. The Cytoplasmic segment spans residues 45–58 (SVYRERNLQTVTNM). A helical membrane pass occupies residues 59 to 79 (LIVSLAVSDLFVAIGVMSFGV). Over 80–96 (YYEWNGFKWGLGSFFCH) the chain is Extracellular. A disulfide bond links Cys-95 and Cys-170. A helical transmembrane segment spans residues 97–117 (VYQALDVACSTASILNLLAIS). The Cytoplasmic segment spans residues 118–141 (LDRYIAIGHPISYAQYGARGGRAM). Residues 142-162 (ISITIVWGVSCAVALPLLLGV) traverse the membrane as a helical segment. Topologically, residues 163 to 179 (NPMENDQCELANPWFNM) are extracellular. The helical transmembrane segment at 180–200 (ISSIFSFFIPCIAMIILYTII) threads the bilayer. Over 201 to 520 (FRRLRQRERA…TKQMRREHKA (320 aa)) the chain is Cytoplasmic. Residues 399–430 (SIQDEKKMNSRPPENPFAHQNGTNKQRLLPNP) are disordered. Residues 521–541 (TVTLAVVLAVFLFCWLPFFIL) form a helical membrane-spanning segment. The Extracellular portion of the chain corresponds to 542-559 (HLSNSICLVIDSNSDCIG). A helical membrane pass occupies residues 560-580 (FLPLYLATWLGYLNSSLNPLI). Residues 581–604 (YTVFDQRFRNAFRNILSCGFFKKR) lie on the Cytoplasmic side of the membrane.

The protein belongs to the G-protein coupled receptor 1 family.

The protein localises to the cell membrane. Functionally, receptor for dopamine. The activity of this receptor is mediated by G proteins which activate adenylyl cyclase. In terms of antagonist responses, would be classed with the D2-like dopamine receptor group. Mediates the effect of dopamine on the inhibition of locomotion. Acts as an antagonist of dop-1. This chain is Dopamine receptor 3, found in Caenorhabditis briggsae.